A 128-amino-acid chain; its full sequence is Small nuclear ribonucleoprotein associated homolog 13 (128 aa).

Belongs to the eukaryotic ribosomal protein eL8 family.

The protein localises to the nucleus. It is found in the nucleolus. In terms of biological role, binds to the 5'-stem-loop of U4 snRNA and may play a role in the late stage of spliceosome assembly. The protein undergoes a conformational change upon RNA-binding. In Caenorhabditis elegans, this protein is Small nuclear ribonucleoprotein associated homolog 13.